The sequence spans 265 residues: Undecaprenyl-diphosphatase (265 aa).

A run of 8 helical transmembrane segments spans residues 7–27, 45–65, 86–106, 108–128, 145–165, 186–206, 214–234, and 245–265; these read IIVSIIIGVIEGITEFLPISS, TKILEIFIEFGSALSILYFFH, LHIILAILPTIFFGLLFYKKI, LLFNTYNVMYALILGGIFLLI, ISLLQSAIIGFFQIFCLYPGF, IEFSFIISIPLIMGASFYDFI, ILDLPIFFIGFMISFIVSILC, and TSLIFFGIYRFIISGLIYFIN.

Belongs to the UppP family.

It localises to the cell membrane. The catalysed reaction is di-trans,octa-cis-undecaprenyl diphosphate + H2O = di-trans,octa-cis-undecaprenyl phosphate + phosphate + H(+). Functionally, catalyzes the dephosphorylation of undecaprenyl diphosphate (UPP). Confers resistance to bacitracin. This Buchnera aphidicola subsp. Acyrthosiphon pisum (strain Tuc7) protein is Undecaprenyl-diphosphatase.